Here is a 498-residue protein sequence, read N- to C-terminus: uncharacterized protein (498 aa).

3 disordered regions span residues 1–48, 99–134, and 190–209; these read MSND…ARPK, NDLH…GNSK, and NSEN…TSSN. Positions 35–44 are enriched in polar residues; sequence ELSTPKQVNQ. Over residues 99–110 the composition is skewed to basic and acidic residues; sequence NDLHPLDNDSTR. The span at 111–126 shows a compositional bias: polar residues; that stretch reads TSKTLKNSSEVLTASK.

This is an uncharacterized protein from Schizosaccharomyces pombe (strain 972 / ATCC 24843) (Fission yeast).